The sequence spans 688 residues: Glycine--tRNA ligase beta subunit (688 aa).

Belongs to the class-II aminoacyl-tRNA synthetase family. Tetramer of two alpha and two beta subunits.

Its subcellular location is the cytoplasm. It catalyses the reaction tRNA(Gly) + glycine + ATP = glycyl-tRNA(Gly) + AMP + diphosphate. The sequence is that of Glycine--tRNA ligase beta subunit from Psychromonas ingrahamii (strain DSM 17664 / CCUG 51855 / 37).